The chain runs to 245 residues: tRNA pseudouridine synthase A (245 aa).

Catalysis depends on D52, which acts as the Nucleophile. Residue Y110 coordinates substrate.

It belongs to the tRNA pseudouridine synthase TruA family. Homodimer.

The catalysed reaction is uridine(38/39/40) in tRNA = pseudouridine(38/39/40) in tRNA. Functionally, formation of pseudouridine at positions 38, 39 and 40 in the anticodon stem and loop of transfer RNAs. The chain is tRNA pseudouridine synthase A from Borrelia hermsii (strain HS1 / DAH).